Here is a 306-residue protein sequence, read N- to C-terminus: UDP-3-O-acyl-N-acetylglucosamine deacetylase (306 aa).

H79, H239, and D243 together coordinate Zn(2+). H266 acts as the Proton donor in catalysis.

The protein belongs to the LpxC family. The cofactor is Zn(2+).

It catalyses the reaction a UDP-3-O-[(3R)-3-hydroxyacyl]-N-acetyl-alpha-D-glucosamine + H2O = a UDP-3-O-[(3R)-3-hydroxyacyl]-alpha-D-glucosamine + acetate. It participates in glycolipid biosynthesis; lipid IV(A) biosynthesis; lipid IV(A) from (3R)-3-hydroxytetradecanoyl-[acyl-carrier-protein] and UDP-N-acetyl-alpha-D-glucosamine: step 2/6. Catalyzes the hydrolysis of UDP-3-O-myristoyl-N-acetylglucosamine to form UDP-3-O-myristoylglucosamine and acetate, the committed step in lipid A biosynthesis. The sequence is that of UDP-3-O-acyl-N-acetylglucosamine deacetylase from Actinobacillus pleuropneumoniae serotype 7 (strain AP76).